The sequence spans 495 residues: UDP-N-acetylmuramoyl-L-alanyl-D-glutamate--2,6-diaminopimelate ligase (495 aa).

UDP-N-acetyl-alpha-D-muramoyl-L-alanyl-D-glutamate-binding positions include Leu28, Ser30, and 45-47 (HRV). ATP is bound at residue 117–123 (GTNGKTT). Residues Asn158, 159-160 (TT), Ser186, Gln192, and Arg194 contribute to the UDP-N-acetyl-alpha-D-muramoyl-L-alanyl-D-glutamate site. Lys226 bears the N6-carboxylysine mark. Meso-2,6-diaminopimelate is bound by residues Arg394, 418 to 421 (DNPR), Gly469, and Glu473. Residues 418–421 (DNPR) carry the Meso-diaminopimelate recognition motif motif.

This sequence belongs to the MurCDEF family. MurE subfamily. Mg(2+) is required as a cofactor. In terms of processing, carboxylation is probably crucial for Mg(2+) binding and, consequently, for the gamma-phosphate positioning of ATP.

It localises to the cytoplasm. The enzyme catalyses UDP-N-acetyl-alpha-D-muramoyl-L-alanyl-D-glutamate + meso-2,6-diaminopimelate + ATP = UDP-N-acetyl-alpha-D-muramoyl-L-alanyl-gamma-D-glutamyl-meso-2,6-diaminopimelate + ADP + phosphate + H(+). It participates in cell wall biogenesis; peptidoglycan biosynthesis. Catalyzes the addition of meso-diaminopimelic acid to the nucleotide precursor UDP-N-acetylmuramoyl-L-alanyl-D-glutamate (UMAG) in the biosynthesis of bacterial cell-wall peptidoglycan. This Histophilus somni (strain 129Pt) (Haemophilus somnus) protein is UDP-N-acetylmuramoyl-L-alanyl-D-glutamate--2,6-diaminopimelate ligase.